We begin with the raw amino-acid sequence, 117 residues long: Transcription elongation factor SPT4 (117 aa).

The interval 1–40 is interaction with SUPT5H; that stretch reads MSLETVPKDLRHLRACLLCSLVKTIDQFEYDGCDNCESYL. A C4-type zinc finger spans residues 16–36; it reads CLLCSLVKTIDQFEYDGCDNC.

The protein belongs to the SPT4 family. As to quaternary structure, interacts with SUPT5H to form the DSIF complex. DSIF interacts with RNA polymerase II and with the positive transcription elongation factor b complex (P-TEFb complex), which is composed of CDK9 and cyclin-T.

It localises to the nucleus. Its function is as follows. May function as a component of the DRB sensitivity-inducing factor complex (DSIF complex), which regulates transcription elongation by RNA polymerase II. Probably enhances transcriptional pausing at sites proximal to the promoter, which may facilitate the assembly of an elongation competent RNA polymerase II complex. Also acts to stimulate transcriptional elongation at low nucleotide concentrations. Regulation of transcriptional elongation by this protein is required for the expression of genes which control neuronal development. The polypeptide is Transcription elongation factor SPT4 (supt4h1) (Danio rerio (Zebrafish)).